The primary structure comprises 230 residues: Sugar fermentation stimulation protein homolog (230 aa).

It belongs to the SfsA family.

The chain is Sugar fermentation stimulation protein homolog from Clostridium botulinum (strain Loch Maree / Type A3).